A 65-amino-acid polypeptide reads, in one-letter code: uncharacterized protein (65 aa).

It is found in the plastid. It localises to the chloroplast. This is an uncharacterized protein from Guillardia theta (Cryptophyte).